The sequence spans 241 residues: Probable transcriptional regulatory protein LHK_02347 (241 aa).

It belongs to the TACO1 family.

It is found in the cytoplasm. This is Probable transcriptional regulatory protein LHK_02347 from Laribacter hongkongensis (strain HLHK9).